Here is a 463-residue protein sequence, read N- to C-terminus: MAFFTVALSLYYLLSRVSTQAPVVQNHSCNTADGGYQCFPNVSHVWGQYSPYFSIEQESAISEDVPHGCEVTFVQVLSRHGARYPTESKSKAYSGLIEAIQKNATSFWGQYAFLESYNYTLGADDLTIFGENQMVDSGAKFYRRYKNLARKNTPFIRASGSDRVVASAEKFINGFRKAQLHDHGSKRATPVVNVIIPEIDGFNNTLDHSTCVSFENDERADEIEANFTAIMGPPIRKRLENDLPGIKLTNENVIYLMDMCSFDTMARTAHGTELSPFCAIFTEKEWLQYDYLQSLSKYYGYGAGSPLGPAQGIGFTNELIARLTQSPVQDNTSTNHTLDSNPATFPLDRKLYADFSHDNSMISIFFAMGLYNGTQPLSMDSVESIQEMDGYAASWTVPFGARAYFELMQCEKKEPLVRVLVNDRVVPLHGCAVDKFGRCTLDDWVEGLNFARSGGNWKTCFTL.

The N-terminal stretch at 1–19 (MAFFTVALSLYYLLSRVST) is a signal peptide. An N-linked (GlcNAc...) asparagine glycan is attached at asparagine 26. Cysteine 29 and cysteine 38 are disulfide-bonded. A glycan (N-linked (GlcNAc...) asparagine) is linked at asparagine 41. Positions 48, 49, 79, 80, 83, and 86 each coordinate 1D-myo-inositol hexakisphosphate. 4 cysteine pairs are disulfide-bonded: cysteine 69–cysteine 410, cysteine 211–cysteine 460, cysteine 260–cysteine 278, and cysteine 431–cysteine 439. Histidine 80 (nucleophile) is an active-site residue. Residues asparagine 103 and asparagine 118 are each glycosylated (N-linked (GlcNAc...) asparagine). Arginine 163 contacts 1D-myo-inositol hexakisphosphate. Residue asparagine 203 is glycosylated (N-linked (GlcNAc...) asparagine). Residue aspartate 207 coordinates 1D-myo-inositol hexakisphosphate. Residue asparagine 226 is glycosylated (N-linked (GlcNAc...) asparagine). Position 297 (lysine 297) interacts with 1D-myo-inositol hexakisphosphate. N-linked (GlcNAc...) asparagine glycosylation is found at asparagine 331 and asparagine 335. 2 residues coordinate 1D-myo-inositol hexakisphosphate: histidine 357 and aspartate 358. N-linked (GlcNAc...) asparagine glycosylation is present at asparagine 372.

It belongs to the histidine acid phosphatase family. Monomer. Seems to be cleaved into at least two pieces, most likely due to proteases in the supernatant. The N-terminal fragment, called phyB seems to retain phytase activity.

The protein resides in the secreted. It catalyses the reaction 1D-myo-inositol hexakisphosphate + H2O = 1D-myo-inositol 1,2,4,5,6-pentakisphosphate + phosphate. The catalysed reaction is 1D-myo-inositol 1,2,4,5,6-pentakisphosphate + H2O = 1D-myo-inositol 1,2,5,6-tetrakisphosphate + phosphate. It carries out the reaction 1D-myo-inositol 1,2,5,6-tetrakisphosphate + H2O = 1D-myo-inositol 1,2,6-trisphosphate + phosphate. The enzyme catalyses 1D-myo-inositol 1,2,6-trisphosphate + H2O = 1D-myo-inositol 1,2-bisphosphate + phosphate. It catalyses the reaction 1D-myo-inositol 1,2-bisphosphate + H2O = 1D-myo-inositol 2-phosphate + phosphate. Its function is as follows. Catalyzes the phosphate monoester hydrolysis of phytic acid (myo-inositol hexakisphosphate), which results in the stepwise formation of myo-inositol pentakis-, tetrakis-, tris-, bis-, and monophosphates, as well as the liberation of inorganic phosphate. Myo-inositol 2-monophosphate is the end product. Has a broad substrate specificity and is also able to dephosphorylate other classic acid phosphatase substrates such as p-nitrophenyl phosphate, phenyl phosphate, fructose 1,6-bisphosphate, fructose 6-phosphate, glucose 6-phosphate, ribose 5-phosphate, alpha-glycerophosphate, beta-glycerophosphate, 3-phosphoglycerate, as well as ADP and ATP. This Emericella nidulans (strain FGSC A4 / ATCC 38163 / CBS 112.46 / NRRL 194 / M139) (Aspergillus nidulans) protein is Phytase A.